A 253-amino-acid chain; its full sequence is Probable transcriptional regulatory protein syc0529_d (253 aa).

It belongs to the TACO1 family.

The protein localises to the cytoplasm. This Synechococcus sp. (strain ATCC 27144 / PCC 6301 / SAUG 1402/1) (Anacystis nidulans) protein is Probable transcriptional regulatory protein syc0529_d.